A 373-amino-acid polypeptide reads, in one-letter code: tRNA (guanine(26)-N(2))-dimethyltransferase (373 aa).

Residues 2-365 (KIISEGETKL…AELSDLVVLI (364 aa)) enclose the Trm1 methyltransferase domain. Positions 35, 66, 86, 113, and 114 each coordinate S-adenosyl-L-methionine.

It belongs to the class I-like SAM-binding methyltransferase superfamily. Trm1 family.

It carries out the reaction guanosine(26) in tRNA + 2 S-adenosyl-L-methionine = N(2)-dimethylguanosine(26) in tRNA + 2 S-adenosyl-L-homocysteine + 2 H(+). Dimethylates a single guanine residue at position 26 of a number of tRNAs using S-adenosyl-L-methionine as donor of the methyl groups. This is tRNA (guanine(26)-N(2))-dimethyltransferase from Methanococcus maripaludis (strain C7 / ATCC BAA-1331).